The chain runs to 297 residues: Homoserine kinase (297 aa).

Position 82–92 (82–92 (PLTRGLGSSAS)) interacts with ATP.

Belongs to the GHMP kinase family. Homoserine kinase subfamily.

Its subcellular location is the cytoplasm. It catalyses the reaction L-homoserine + ATP = O-phospho-L-homoserine + ADP + H(+). It participates in amino-acid biosynthesis; L-threonine biosynthesis; L-threonine from L-aspartate: step 4/5. Its function is as follows. Catalyzes the ATP-dependent phosphorylation of L-homoserine to L-homoserine phosphate. The chain is Homoserine kinase from Bacillus cereus (strain ATCC 14579 / DSM 31 / CCUG 7414 / JCM 2152 / NBRC 15305 / NCIMB 9373 / NCTC 2599 / NRRL B-3711).